A 257-amino-acid chain; its full sequence is Probable enoyl-CoA hydratase echA17 (257 aa).

The protein belongs to the enoyl-CoA hydratase/isomerase family.

The catalysed reaction is a (3S)-3-hydroxyacyl-CoA = a (2E)-enoyl-CoA + H2O. The enzyme catalyses a 4-saturated-(3S)-3-hydroxyacyl-CoA = a (3E)-enoyl-CoA + H2O. Functionally, could possibly oxidize fatty acids using specific components. This chain is Probable enoyl-CoA hydratase echA17 (echA17), found in Mycolicibacterium paratuberculosis (strain ATCC BAA-968 / K-10) (Mycobacterium paratuberculosis).